The sequence spans 1161 residues: MAQLANIGELLSMLDSSTLGVRDDVTAIFKESLNSERGPMLVNTLVDYYLETNSQPVLHILTTLQEPHDKHLLDKINEYVGKAATRLSILSLLGHVVRLQPSWKHKLSQAPLLPSLLKCLKMDTDVVVLTTGVLVLITMLPMIPQSGKQHLLDFFDIFGRLSSWCLKKPGHVTEVYLVHLHASVYALFHRLYGMYPCNFVSFLRSHYSMKENVETFEEVVKPMMEHVRIHPELVTGSKDHELDPRRWKTLETHDVVIECAKISLDPTEASYEDGYSVSHQLSACFPYRSADVTTSPYVDTQNSYGGSTSTPSSSSRLMLFSPPGQLPQSLSSPSTRLLPEPLQASLWSPSAVCGMTTPPTSPGNVPADLSHPYSKAFGTTAGGKGTPSGTPATSPPPAPPCPQDDCVHGSAAQASATAPRKEERADSSRPYLHRQSNDRGLEDPPGSKGSVTLRNLPDFLGDLASEEDSIEKDKEEAAISKELSEITTAEADPVVPRGGFDSPFYRDSLSGSQRKTHSAASGTQGSSVNPEPLHSSLDKHGPDTPKQAFTPIDPPSGSADVSPAGDRDRQTSLETSILTPSPCKIPPQRGVSFGSGQLPPYDHLFEVALPKTACHFVSKKTEELLKKVKGNPEEDCVPSTSPMEVLDRLIEQGAGAHSKELSRLSLPSKSVDWTHFGGSPPSDELRTLRDQLLLLHNQLLYERFKRQQHALRNRRLLRKVIRAAALEEHNAAMKDQLKLQEKDIQMWKVSLQKEQARYSQLQEQRDTMVTQLHSQIRQLQHDREEFYNQSQELQTKLEDCRNMIAELRVELKKANNKVCHTELLLSQVSQKLSNSESVQQQMEFLNRQLLVLGEVNELYLEQLQSKHPDTTKEVEMMKTAYRKELEKNRSHLLQQNQRLDASQRRVLELESLLAKKDHLLLEQKKYLEDVKSQASGQLLAAESRYEAQRKITRVLELEILDLYGRLEKDGRLRKLEEDRAEAAEAAEERLDCCSDGCTDSLVGHNEEASGHNGETRTSRPGGTRASCGGRVTGGSSSSSSELSTPEKPPSQRFSSRWEPALGEPSSSIPTTVGSLPSSKSFLGMKARELFRNKSESQCDEDSVTMSSSSLSETLKTELGKDSGTENKTSLSLDAPHPSSPNSDNVGQLHIMDYNETHPEHS.

Lys30 is covalently cross-linked (Glycyl lysine isopeptide (Lys-Gly) (interchain with G-Cter in ubiquitin)). Disordered stretches follow at residues 296–336 and 353–591; these read PYVD…PSTR and CGMT…QRGV. Residues 303 to 336 show a composition bias toward low complexity; sequence SYGGSTSTPSSSSRLMLFSPPGQLPQSLSSPSTR. The segment covering 393-402 has biased composition (pro residues); sequence TSPPPAPPCP. The interval 403-784 is mediates interaction with WDR45B; it reads QDDCVHGSAA…QIRQLQHDRE (382 aa). Residues 471–484 show a composition bias toward basic and acidic residues; that stretch reads EKDKEEAAISKELS. 6 positions are modified to phosphoserine: Ser484, Ser502, Ser508, Ser518, Ser592, and Ser595. Over residues 509 to 529 the composition is skewed to polar residues; it reads LSGSQRKTHSAASGTQGSSVN. 3 coiled-coil regions span residues 721–849, 879–917, and 967–991; these read IRAA…NRQL, TAYRKELEKNRSHLLQQNQRLDASQRRVLELESLLAKKD, and EKDGRLRKLEEDRAEAAEAAEERLD. Disordered stretches follow at residues 1003 to 1077 and 1092 to 1161; these read GHNE…SLPS and NKSE…PEHS. A compositionally biased stretch (basic and acidic residues) spans 1004–1017; the sequence is HNEEASGHNGETRT. Positions 1026 to 1043 are enriched in low complexity; the sequence is SCGGRVTGGSSSSSSELS. The span at 1064 to 1077 shows a compositional bias: polar residues; it reads PSSSIPTTVGSLPS. Phosphoserine is present on Ser1094. Over residues 1103–1113 the composition is skewed to low complexity; it reads VTMSSSSLSET. 2 stretches are compositionally biased toward basic and acidic residues: residues 1114–1124 and 1152–1161; these read LKTELGKDSGT and DYNETHPEHS.

Component of the TSC-TBC complex (also named Rhebulator complex), composed of 2 molecules of TSC1, 2 molecules of TSC2 and 1 molecule of TBC1D7. Probably forms a complex composed of chaperones HSP90 and HSP70, co-chaperones STIP1/HOP, CDC37, PPP5C, PTGES3/p23, TSC1 and client protein TSC2. Forms a complex composed of chaperones HSP90 and HSP70, co-chaperones CDC37, PPP5C, TSC1 and client protein TSC2, CDK4, AKT, RAF1 and NR3C1; this complex does not contain co-chaperones STIP1/HOP and PTGES3/p23. Forms a complex containing HSP90AA1, TSC1 and TSC2; TSC1 is required to recruit TCS2 to the complex. Interacts (via C-terminus) with the closed form of HSP90AA1 (via the middle domain and TPR repeat-binding motif). Interacts with DOCK7. Interacts with FBXW5. Interacts with WDR45B. Interacts with RPAP3 and URI1. Post-translationally, phosphorylation at Ser-502 does not affect interaction with TSC2. In terms of processing, 'Lys-63'-linked ubiquitinated at Lys-30 by PELI1; the ubiquitination promotes TSC1/TSC2 complex stability.

It is found in the lysosome membrane. The protein localises to the cytoplasm. Its subcellular location is the cytosol. Its function is as follows. Non-catalytic component of the TSC-TBC complex, a multiprotein complex that acts as a negative regulator of the canonical mTORC1 complex, an evolutionarily conserved central nutrient sensor that stimulates anabolic reactions and macromolecule biosynthesis to promote cellular biomass generation and growth. The TSC-TBC complex acts as a GTPase-activating protein (GAP) for the small GTPase RHEB, a direct activator of the protein kinase activity of mTORC1. In absence of nutrients, the TSC-TBC complex inhibits mTORC1, thereby preventing phosphorylation of ribosomal protein S6 kinase (RPS6KB1 and RPS6KB2) and EIF4EBP1 (4E-BP1) by the mTORC1 signaling. The TSC-TBC complex is inactivated in response to nutrients, relieving inhibition of mTORC1. Within the TSC-TBC complex, TSC1 stabilizes TSC2 and prevents TSC2 self-aggregation. Involved in microtubule-mediated protein transport via its ability to regulate mTORC1 signaling. Also acts as a co-chaperone for HSP90AA1 facilitating HSP90AA1 chaperoning of protein clients such as kinases, TSC2 and glucocorticoid receptor NR3C1. Increases ATP binding to HSP90AA1 and inhibits HSP90AA1 ATPase activity. Competes with the activating co-chaperone AHSA1 for binding to HSP90AA1, thereby providing a reciprocal regulatory mechanism for chaperoning of client proteins. Recruits TSC2 to HSP90AA1 and stabilizes TSC2 by preventing the interaction between TSC2 and ubiquitin ligase HERC1. In Mus musculus (Mouse), this protein is Hamartin.